An 83-amino-acid polypeptide reads, in one-letter code: Large ribosomal subunit protein uL24 (83 aa).

Belongs to the universal ribosomal protein uL24 family. As to quaternary structure, part of the 50S ribosomal subunit.

Its function is as follows. One of two assembly initiator proteins, it binds directly to the 5'-end of the 23S rRNA, where it nucleates assembly of the 50S subunit. In terms of biological role, one of the proteins that surrounds the polypeptide exit tunnel on the outside of the subunit. In Symbiobacterium thermophilum (strain DSM 24528 / JCM 14929 / IAM 14863 / T), this protein is Large ribosomal subunit protein uL24.